Reading from the N-terminus, the 378-residue chain is MQEKTGSPVLRNARRIVVKVGSSLVTNEGRGLDADAIGLWCEQLAALVKDGREVIMVSSGAIAEGMKRLGWTARPKAIHELQAAAAVGQMGLAQVYESKLRENGIGSAQVLLTHADLADRERYLNARSTLLALLQLGVVPVINENDTVVNDEIKFGDNDTLGALVANLVEADALVILTDQKGLYTADPRKDPAARFVHEAKAGDAALEAMAGGAGSSIGKGGMITKILAAKRAAGSGASTVIAWGREPQALIRLTQGEAIGTLLVAQTQKIQARKQWMADHLQMRGSVAVDAGAVSKVRDEGKSLLPIGMTRVDGDFSRGDVIAIRDAEGAEIARGLANYSSSEARLICRKASSEFERLLGYTGEPEMVHRTNLVLTR.

Position 19 (Lys19) interacts with ATP. The substrate site is built by Ser59, Asp146, and Asn158. Residue 178 to 179 (TD) coordinates ATP. Residues 285 to 363 (RGSVAVDAGA…SEFERLLGYT (79 aa)) enclose the PUA domain.

The protein belongs to the glutamate 5-kinase family.

The protein resides in the cytoplasm. It catalyses the reaction L-glutamate + ATP = L-glutamyl 5-phosphate + ADP. It participates in amino-acid biosynthesis; L-proline biosynthesis; L-glutamate 5-semialdehyde from L-glutamate: step 1/2. Its function is as follows. Catalyzes the transfer of a phosphate group to glutamate to form L-glutamate 5-phosphate. This is Glutamate 5-kinase from Polaromonas sp. (strain JS666 / ATCC BAA-500).